We begin with the raw amino-acid sequence, 902 residues long: Cytosolic carboxypeptidase 2 (902 aa).

The Peptidase M14 domain occupies 396 to 666; sequence YPYTYTDLQC…HVCDTLLDFC (271 aa). Zn(2+) is bound by residues H462, E465, and H558. E630 serves as the catalytic Proton donor/acceptor. Residues 746-758 are compositionally biased toward basic residues; the sequence is FKKKKKKSLQTRK. 2 disordered regions span residues 746 to 770 and 796 to 879; these read FKKKKKKSLQTRKQRNEQYQKKNLM and FKNS…PRSR. Residues 853–866 show a composition bias toward polar residues; it reads VSCSPKRTINSSQE.

Belongs to the peptidase M14 family. Interacts with RARRES1, KIF11 AND MAPRE1. Zn(2+) is required as a cofactor.

The protein resides in the cytoplasm. The protein localises to the cytosol. It localises to the cytoskeleton. Its subcellular location is the microtubule organizing center. It is found in the centrosome. The protein resides in the centriole. The protein localises to the cilium basal body. The catalysed reaction is (L-glutamyl)(n+1)-gamma-L-glutamyl-L-glutamyl-[protein] + H2O = (L-glutamyl)(n)-gamma-L-glutamyl-L-glutamyl-[protein] + L-glutamate. Inhibited by RARRES1. Its function is as follows. Metallocarboxypeptidase that mediates deglutamylation of tubulin and non-tubulin target proteins. Catalyzes the removal of polyglutamate side chains present on the gamma-carboxyl group of glutamate residues within the C-terminal tail of tubulin protein. Specifically cleaves tubulin long-side-chains, while it is not able to remove the branching point glutamate. Also catalyzes the removal of polyglutamate residues from the carboxy-terminus of non-tubulin proteins such as MYLK. The protein is Cytosolic carboxypeptidase 2 of Homo sapiens (Human).